Consider the following 740-residue polypeptide: MLKLFSAFRKNKIWDFNGGIHPPEMKTQSNGTPLRQVPLAQRFVIPLKQHIGAEGELCVSVGDKVLRGQPLTRGHGKMLPVHAPTSGTVTAIAPHSTAHPSALAELSVIIDADGEDCWIPRDGWADYRTRSREELIERIHQFGVAGLGGAGFPTGVKLQGGGDKIETLIINAAECEPYITADDRLMQDCAAQVVEGIRILAHILQPREILIGIEDNKPQAISMLRAVLADSNDISLRVIPTKYPSGGAKQLTYILTGKQVPHGGRSSDIGVLMQNVGTAYAVKRAVIDGEPITERVVTLTGEAIARPGNVWARLGTPVRHLLNDAGFCPSADQMVIMGGPLMGFTLPWLDVPVVKITNCLLAPSANELGEPQEEQSCIRCSACADACPADLLPQQLYWFSKGQQHDKATTHNIADCIECGACAWVCPSNIPLVQYFRQEKAEIAAIRQEEKRAAEAKARFEARQARLEREKAARLERHKSAAVQPAAKDKDAIAAALARVKEKQAQATQPIVIKAGERPDNSAIIAAREARKAQARAKQAELQQTNDAATVADPRKTAVEAAIARAKARKLEQQQANAEPEEQVDPRKAAVEAAIARAKARKLEQQQANAEPEEQVDPRKAAVEAAIARAKARKLEQQQSNAEPEEQVDPRKAAVEAAIARAKARKLEQQQANAEPEEQVDPRKAAVEAAIARAKARKLEQQQTNAEPEEQVDPRKAAVAAAIARAQAKKAAQQKVVNED.

2 consecutive 4Fe-4S ferredoxin-type domains span residues 369–397 (GEPQ…QQLY) and 407–436 (KATT…VQYF). Residues Cys-377, Cys-380, Cys-383, Cys-387, Cys-416, Cys-419, Cys-422, and Cys-426 each contribute to the [4Fe-4S] cluster site. The interval 602 to 716 (KLEQQQANAE…EPEEQVDPRK (115 aa)) is disordered.

Belongs to the 4Fe4S bacterial-type ferredoxin family. RnfC subfamily. The complex is composed of six subunits: RsxA, RsxB, RsxC, RsxD, RsxE and RsxG. [4Fe-4S] cluster is required as a cofactor.

It localises to the cell inner membrane. Part of a membrane-bound complex that couples electron transfer with translocation of ions across the membrane. Required to maintain the reduced state of SoxR. The chain is Ion-translocating oxidoreductase complex subunit C from Escherichia coli O139:H28 (strain E24377A / ETEC).